The primary structure comprises 489 residues: UDP-N-acetylmuramate--L-alanine ligase (489 aa).

ATP is bound at residue 128-134; sequence GTHGKTT.

This sequence belongs to the MurCDEF family.

It localises to the cytoplasm. It carries out the reaction UDP-N-acetyl-alpha-D-muramate + L-alanine + ATP = UDP-N-acetyl-alpha-D-muramoyl-L-alanine + ADP + phosphate + H(+). It participates in cell wall biogenesis; peptidoglycan biosynthesis. In terms of biological role, cell wall formation. The chain is UDP-N-acetylmuramate--L-alanine ligase from Shewanella sediminis (strain HAW-EB3).